Reading from the N-terminus, the 1058-residue chain is Carbamoyl phosphate synthase large chain (1058 aa).

The segment at 1-401 is carboxyphosphate synthetic domain; it reads MPKRKDIKTI…SLLKAIRSLE (401 aa). 12 residues coordinate ATP: R129, R169, G175, G176, K208, I210, E215, G241, I242, H243, Q284, and E298. Residues 133–327 form the ATP-grasp 1 domain; it reads RDLMNELNEP…IAKIAAKIAV (195 aa). Positions 284, 298, and 300 each coordinate Mg(2+). Residues Q284, E298, and N300 each coordinate Mn(2+). Residues 402-546 are oligomerization domain; the sequence is YGVHHLGLPN…YSTYEFENES (145 aa). The segment at 547–929 is carbamoyl phosphate synthetic domain; that stretch reads TRSDKEKIVV…ALYKGLTAAG (383 aa). The ATP-grasp 2 domain occupies 671 to 861; the sequence is EKLLIGLKIP…VANIAMQCIL (191 aa). Positions 707, 746, 748, 752, 777, 778, 779, 780, 820, and 832 each coordinate ATP. Positions 820, 832, and 834 each coordinate Mg(2+). Residues Q820, E832, and N834 each contribute to the Mn(2+) site. The region spanning 930-1058 is the MGS-like domain; that stretch reads IKIKDYGRVL…ESMSFRVQTL (129 aa). Residues 930–1058 are allosteric domain; the sequence is IKIKDYGRVL…ESMSFRVQTL (129 aa).

This sequence belongs to the CarB family. As to quaternary structure, composed of two chains; the small (or glutamine) chain promotes the hydrolysis of glutamine to ammonia, which is used by the large (or ammonia) chain to synthesize carbamoyl phosphate. Tetramer of heterodimers (alpha,beta)4. Requires Mg(2+) as cofactor. Mn(2+) is required as a cofactor.

The enzyme catalyses hydrogencarbonate + L-glutamine + 2 ATP + H2O = carbamoyl phosphate + L-glutamate + 2 ADP + phosphate + 2 H(+). It carries out the reaction hydrogencarbonate + NH4(+) + 2 ATP = carbamoyl phosphate + 2 ADP + phosphate + 2 H(+). The protein operates within amino-acid biosynthesis; L-arginine biosynthesis; carbamoyl phosphate from bicarbonate: step 1/1. It participates in pyrimidine metabolism; UMP biosynthesis via de novo pathway; (S)-dihydroorotate from bicarbonate: step 1/3. In terms of biological role, large subunit of the glutamine-dependent carbamoyl phosphate synthetase (CPSase). CPSase catalyzes the formation of carbamoyl phosphate from the ammonia moiety of glutamine, carbonate, and phosphate donated by ATP, constituting the first step of 2 biosynthetic pathways, one leading to arginine and/or urea and the other to pyrimidine nucleotides. The large subunit (synthetase) binds the substrates ammonia (free or transferred from glutamine from the small subunit), hydrogencarbonate and ATP and carries out an ATP-coupled ligase reaction, activating hydrogencarbonate by forming carboxy phosphate which reacts with ammonia to form carbamoyl phosphate. This chain is Carbamoyl phosphate synthase large chain, found in Fusobacterium nucleatum subsp. nucleatum (strain ATCC 25586 / DSM 15643 / BCRC 10681 / CIP 101130 / JCM 8532 / KCTC 2640 / LMG 13131 / VPI 4355).